The primary structure comprises 127 residues: Unclassified hydrophobin 5 (127 aa).

The signal sequence occupies residues methionine 1–alanine 24. Cystine bridges form between cysteine 39–cysteine 107, cysteine 46–cysteine 101, cysteine 47–cysteine 92, and cysteine 108–cysteine 121.

This sequence belongs to the fungal hydrophobin family. In terms of assembly, self-assembles to form functional amyloid fibrils called rodlets. Self-assembly into fibrillar rodlets occurs spontaneously at hydrophobic:hydrophilic interfaces and the rodlets further associate laterally to form amphipathic monolayers.

It is found in the secreted. Its subcellular location is the cell wall. Functionally, aerial growth, conidiation, and dispersal of filamentous fungi in the environment rely upon a capability of their secreting small amphipathic proteins called hydrophobins (HPBs) with low sequence identity. Class I can self-assemble into an outermost layer of rodlet bundles on aerial cell surfaces, conferring cellular hydrophobicity that supports fungal growth, development and dispersal; whereas Class II form highly ordered films at water-air interfaces through intermolecular interactions but contribute nothing to the rodlet structure. This chain is Unclassified hydrophobin 5, found in Pleurotus ostreatus (strain PC15) (Oyster mushroom).